Consider the following 713-residue polypeptide: Polyribonucleotide nucleotidyltransferase (713 aa).

Mg(2+) is bound by residues Asp498 and Asp504. The 67-residue stretch at 565–631 folds into the KH domain; sequence PRILSLKVPV…RIEDLTREAK (67 aa). One can recognise an S1 motif domain in the interval 633–701; that stretch reads GEIYEGTVTR…ERGKIDLIRP (69 aa).

It belongs to the polyribonucleotide nucleotidyltransferase family. Mg(2+) is required as a cofactor.

Its subcellular location is the cytoplasm. It catalyses the reaction RNA(n+1) + phosphate = RNA(n) + a ribonucleoside 5'-diphosphate. Functionally, involved in mRNA degradation. Catalyzes the phosphorolysis of single-stranded polyribonucleotides processively in the 3'- to 5'-direction. The polypeptide is Polyribonucleotide nucleotidyltransferase (Thermus thermophilus).